The chain runs to 454 residues: Glutamyl-tRNA reductase (454 aa).

Residues 49–52 (TCNR), S109, 114–116 (ETQ), and Q120 contribute to the substrate site. Catalysis depends on C50, which acts as the Nucleophile. NADP(+) is bound at residue 189-194 (GAGKMS). The tract at residues 434–454 (NDKNKQTSSSREQVLVSRFPD) is disordered.

Belongs to the glutamyl-tRNA reductase family. As to quaternary structure, homodimer.

It carries out the reaction (S)-4-amino-5-oxopentanoate + tRNA(Glu) + NADP(+) = L-glutamyl-tRNA(Glu) + NADPH + H(+). It participates in porphyrin-containing compound metabolism; protoporphyrin-IX biosynthesis; 5-aminolevulinate from L-glutamyl-tRNA(Glu): step 1/2. In terms of biological role, catalyzes the NADPH-dependent reduction of glutamyl-tRNA(Glu) to glutamate 1-semialdehyde (GSA). The sequence is that of Glutamyl-tRNA reductase from Brevibacillus brevis (strain 47 / JCM 6285 / NBRC 100599).